We begin with the raw amino-acid sequence, 85 residues long: Protein C4 (85 aa).

Glycine 2 is lipidated: N-myristoyl glycine; by host. The disordered stretch occupies residues 42 to 65 (LNPAPTSSPTSTRTETQLNGGNSR). Positions 44-57 (PAPTSSPTSTRTET) are enriched in low complexity.

This sequence belongs to the geminiviridae protein AC4/C4 family. Interacts with Arabidopsis thaliana RCH2, ASK7/ASK-eta and ASK6/ASK-zeta. Post-translationally, phosphorylated by Arabidopsis thaliana ASK7/ASK-eta mainly on threonine and serine residues. Expressed in vascular tissues, and especially in phloem cells.

It is found in the host cell membrane. In terms of biological role, major determinant of pathogenesis that affects the hyperplastic response of the host to viral infection. Mediates the induction of cell division in permissive cells, mainly in phloem. May act as a suppressor of RNA-mediated gene silencing, also known as post-transcriptional gene silencing (PTGS), a mechanism of plant viral defense that limits the accumulation of viral RNAs. The sequence is that of Protein C4 from Beet curly top virus (strain California/Logan) (BCTV).